The sequence spans 503 residues: ATP synthase subunit alpha, chloroplastic (503 aa).

Position 170-177 (170-177) interacts with ATP; sequence GDRQTGKT.

The protein belongs to the ATPase alpha/beta chains family. As to quaternary structure, F-type ATPases have 2 components, CF(1) - the catalytic core - and CF(0) - the membrane proton channel. CF(1) has five subunits: alpha(3), beta(3), gamma(1), delta(1), epsilon(1). CF(0) has four main subunits: a, b, b' and c.

Its subcellular location is the plastid. The protein resides in the chloroplast thylakoid membrane. The enzyme catalyses ATP + H2O + 4 H(+)(in) = ADP + phosphate + 5 H(+)(out). In terms of biological role, produces ATP from ADP in the presence of a proton gradient across the membrane. The alpha chain is a regulatory subunit. This is ATP synthase subunit alpha, chloroplastic from Thalassiosira pseudonana (Marine diatom).